The chain runs to 815 residues: (-)-kolavenyl diphosphate synthase TPS28, chloroplastic (815 aa).

The transit peptide at 1 to 51 (MFMSSSSSSHARRPQLSSFSYLHPPLPFPGLSFFNTRDKRVNFDSTRIICI) directs the protein to the chloroplast. Residue K247 participates in substrate binding. Mg(2+) contacts are provided by D379 and D381. The DXDD motif signature appears at 379–382 (DIDD). K465 is a substrate binding site.

Belongs to the terpene synthase family. Tpsc subfamily. The cofactor is Mg(2+).

It localises to the plastid. The protein localises to the chloroplast. It catalyses the reaction (2E,6E,10E)-geranylgeranyl diphosphate = (-)-kolavenyl diphosphate. With respect to regulation, inhibited by high concentrations of magnesium. In terms of biological role, diterpene synthase that catalyzes the formation of (-)-kolavenyl diphosphate from geranylgeranyl diphosphate (GGPP). The chain is (-)-kolavenyl diphosphate synthase TPS28, chloroplastic from Tripterygium wilfordii (Thunder God vine).